The primary structure comprises 1077 residues: Adenylate cyclase type 4 (1077 aa).

The Cytoplasmic portion of the chain corresponds to 1 to 28; it reads MARLFSPRPPPSEDLFYETYYSLSQQYP. The next 6 helical transmembrane spans lie at 29 to 50, 61 to 80, 94 to 117, 120 to 138, 141 to 162, and 170 to 190; these read LLILLLVIVLCALVALPAVAWA, FLTTVLCALGGFSLLLGLAS, GLIWVALLALGYGFLFTGGVVSAW, VSFFLFIIFTVYAMLPLGM, AAAAGVISSLSHLLVLGLYLGW, and LLPQLAANAVLFLCGNVVGAY. Over 191 to 582 the chain is Cytoplasmic; sequence HKALMERALR…YRLSALPAFK (392 aa). Positions 278, 279, and 322 each coordinate Mg(2+). ATP is bound by residues 278–283, 320–322, and Arg366; these read DIVGFT and LGD. Residues 503–524 form a disordered region; sequence TSTPLPEKAFSPQWSLDRSRTP. At Ser517 the chain carries Phosphoserine. Phosphothreonine is present on Thr533. Transmembrane regions (helical) follow at residues 583–604, 608–630, and 661–684; these read YYAACTFLVFLSNFTIQMLVTT, ALIITYSITFLLFFLLLFVCFSE, and VALGTATILLVFTMAIASLLFLPV. The Extracellular portion of the chain corresponds to 685–717; that stretch reads SSDCLFLASNVSSVTFNASWEMPGSLPLISIPL. 2 N-linked (GlcNAc...) asparagine glycosylation sites follow: Asn694 and Asn701. Helical transmembrane passes span 718-738, 746-766, and 793-809; these read ISIPYSMHCCVLGFLSCSLFL, LLLLLLWLVASCSLFLHSHAW, and MGAIYFFIFFFTLLVLA. At 810–1077 the chain is on the cytoplasmic side; it reads RQNEYYCRLD…LTRTGSPSAS (268 aa). ATP is bound by residues Lys927, 1007–1009, 1014–1018, and Lys1054; these read DIW and NVASR.

This sequence belongs to the adenylyl cyclase class-4/guanylyl cyclase family. Mg(2+) serves as cofactor. Mn(2+) is required as a cofactor.

The protein localises to the cell membrane. The protein resides in the cytoplasm. It carries out the reaction ATP = 3',5'-cyclic AMP + diphosphate. With respect to regulation, activated by forskolin. Insensitive to calcium/calmodulin. Stimulated by GNAS and by the G-protein beta and gamma subunit complex. Functionally, catalyzes the formation of the signaling molecule cAMP in response to G-protein signaling. In Mus musculus (Mouse), this protein is Adenylate cyclase type 4 (Adcy4).